The following is a 157-amino-acid chain: 2-C-methyl-D-erythritol 2,4-cyclodiphosphate synthase (157 aa).

Asp9 and His11 together coordinate a divalent metal cation. 4-CDP-2-C-methyl-D-erythritol 2-phosphate is bound by residues 9-11 (DVH) and 35-36 (HS). His43 is an a divalent metal cation binding site. 4-CDP-2-C-methyl-D-erythritol 2-phosphate is bound by residues 57 to 59 (DIG), 62 to 66 (FPDTD), 101 to 107 (AEKPKMA), 133 to 136 (TTTE), Phe140, and Arg143.

This sequence belongs to the IspF family. As to quaternary structure, homotrimer. Requires a divalent metal cation as cofactor.

It catalyses the reaction 4-CDP-2-C-methyl-D-erythritol 2-phosphate = 2-C-methyl-D-erythritol 2,4-cyclic diphosphate + CMP. The protein operates within isoprenoid biosynthesis; isopentenyl diphosphate biosynthesis via DXP pathway; isopentenyl diphosphate from 1-deoxy-D-xylulose 5-phosphate: step 4/6. Its function is as follows. Involved in the biosynthesis of isopentenyl diphosphate (IPP) and dimethylallyl diphosphate (DMAPP), two major building blocks of isoprenoid compounds. Catalyzes the conversion of 4-diphosphocytidyl-2-C-methyl-D-erythritol 2-phosphate (CDP-ME2P) to 2-C-methyl-D-erythritol 2,4-cyclodiphosphate (ME-CPP) with a corresponding release of cytidine 5-monophosphate (CMP). The protein is 2-C-methyl-D-erythritol 2,4-cyclodiphosphate synthase of Listeria monocytogenes serovar 1/2a (strain ATCC BAA-679 / EGD-e).